Reading from the N-terminus, the 248-residue chain is Adenosylcobinamide-GDP ribazoletransferase (248 aa).

The next 6 membrane-spanning stretches (helical) occupy residues Phe36–Leu56, Phe59–Gly79, Gly114–Leu134, Tyr137–Leu157, Ile170–Leu190, and Ala199–Leu219.

The protein belongs to the CobS family. Requires Mg(2+) as cofactor.

The protein localises to the cell membrane. The catalysed reaction is alpha-ribazole + adenosylcob(III)inamide-GDP = adenosylcob(III)alamin + GMP + H(+). It carries out the reaction alpha-ribazole 5'-phosphate + adenosylcob(III)inamide-GDP = adenosylcob(III)alamin 5'-phosphate + GMP + H(+). Its pathway is cofactor biosynthesis; adenosylcobalamin biosynthesis; adenosylcobalamin from cob(II)yrinate a,c-diamide: step 7/7. Joins adenosylcobinamide-GDP and alpha-ribazole to generate adenosylcobalamin (Ado-cobalamin). Also synthesizes adenosylcobalamin 5'-phosphate from adenosylcobinamide-GDP and alpha-ribazole 5'-phosphate. In Clostridium botulinum (strain Okra / Type B1), this protein is Adenosylcobinamide-GDP ribazoletransferase.